The following is a 432-amino-acid chain: Serine hydroxymethyltransferase (432 aa).

Residues leucine 131 and 135–137 each bind (6S)-5,6,7,8-tetrahydrofolate; that span reads GHL. Lysine 240 carries the post-translational modification N6-(pyridoxal phosphate)lysine.

Belongs to the SHMT family. In terms of assembly, homodimer. Pyridoxal 5'-phosphate is required as a cofactor.

Its subcellular location is the cytoplasm. It carries out the reaction (6R)-5,10-methylene-5,6,7,8-tetrahydrofolate + glycine + H2O = (6S)-5,6,7,8-tetrahydrofolate + L-serine. Its pathway is one-carbon metabolism; tetrahydrofolate interconversion. It participates in amino-acid biosynthesis; glycine biosynthesis; glycine from L-serine: step 1/1. In terms of biological role, catalyzes the reversible interconversion of serine and glycine with tetrahydrofolate (THF) serving as the one-carbon carrier. This reaction serves as the major source of one-carbon groups required for the biosynthesis of purines, thymidylate, methionine, and other important biomolecules. Also exhibits THF-independent aldolase activity toward beta-hydroxyamino acids, producing glycine and aldehydes, via a retro-aldol mechanism. The sequence is that of Serine hydroxymethyltransferase from Acidiphilium cryptum (strain JF-5).